Consider the following 63-residue polypeptide: Cytochrome c oxidase subunit 5C (63 aa).

Residues 16–34 traverse the membrane as a helical segment; that stretch reads VVKEIFIGLTLGLVAGGMW.

Belongs to the cytochrome c oxidase subunit 5C family.

The protein resides in the mitochondrion inner membrane. In terms of biological role, this protein is one of the nuclear-coded polypeptide chains of cytochrome c oxidase, the terminal oxidase in mitochondrial electron transport. The chain is Cytochrome c oxidase subunit 5C (COX5C) from Hordeum vulgare (Barley).